A 32-amino-acid polypeptide reads, in one-letter code: Beta-amanitin proprotein (32 aa).

Residues 1–10 (MSDINATRLP) constitute a propeptide that is removed on maturation. Residues 11 to 18 (IWGIGCDP) constitute a cross-link (cyclopeptide (Ile-Pro)). A cross-link (2'-cysteinyl-6'-hydroxytryptophan sulfoxide (Trp-Cys)) is located at residues 12–16 (WGIGC). Positions 19 to 32 (CIGDDVTILLTRGE) are excised as a propeptide.

This sequence belongs to the MSDIN fungal toxin family. Processed by the macrocyclase-peptidase enzyme POPB to yield a toxic cyclic decapeptide. POPB first removes 10 residues from the N-terminus. Conformational trapping of the remaining peptide forces the enzyme to release this intermediate rather than proceed to macrocyclization. The enzyme rebinds the remaining peptide in a different conformation and catalyzes macrocyclization of the N-terminal 8 residues.

Functionally, toxin belonging to the bicyclic octapeptides amatoxins that acts by binding non-competitively to RNA polymerase II and greatly slowing the elongation of transcripts from target promoters. This chain is Beta-amanitin proprotein, found in Amanita phalloides (Death cap).